Consider the following 313-residue polypeptide: uncharacterized protein (313 aa).

Helical transmembrane passes span 19 to 41 (GLAVAIALITAIAWFPDGLAGFL), 51 to 68 (AIIGAILTILGLSIIFFL), and 81 to 103 (IAEFGFIVLTLIFSLIVFNDFAI).

Its subcellular location is the cell membrane. This is an uncharacterized protein from Aquifex aeolicus (strain VF5).